Here is a 607-residue protein sequence, read N- to C-terminus: Protein NRT1/ PTR FAMILY 1.2 (607 aa).

10 helical membrane-spanning segments follow: residues 65 to 85, 96 to 116, 138 to 158, 185 to 205, 215 to 235, 374 to 394, 418 to 438, 460 to 480, 496 to 516, and 544 to 564; these read TNVL…GAFL, ISIA…TAML, ASQL…SGGI, FFGW…TGIV, IGFG…ILAS, VPAG…VILY, MGLG…VESF, AMWL…TAIG, IAAS…SVVL, and YYWV…ICSW. S601 is modified (phosphoserine).

This sequence belongs to the major facilitator superfamily. Proton-dependent oligopeptide transporter (POT/PTR) (TC 2.A.17) family. Expressed in shoots, stems, leaves, flowers and siliques. Mainly detected in larger expanded leaves, in the companion cells of major veins.

The protein resides in the cell membrane. Its function is as follows. Low-affinity nitrate transporter involved in xylem-to-phloem transfer for redistributing nitrate into developing leaves. Not involved in dipeptides transport. In Arabidopsis thaliana (Mouse-ear cress), this protein is Protein NRT1/ PTR FAMILY 1.2 (NPF1.2).